The primary structure comprises 507 residues: ATP synthase subunit alpha, mitochondrial (507 aa).

171-178 (GDRQTGKT) contributes to the ATP binding site.

This sequence belongs to the ATPase alpha/beta chains family. In terms of assembly, F-type ATPases have 2 components, CF(1) - the catalytic core - and CF(0) - the membrane proton channel. CF(1) has five subunits: alpha(3), beta(3), gamma(1), delta(1), epsilon(1). CF(0) has three main subunits: a, b and c.

The protein localises to the mitochondrion. The protein resides in the mitochondrion inner membrane. Mitochondrial membrane ATP synthase (F(1)F(0) ATP synthase or Complex V) produces ATP from ADP in the presence of a proton gradient across the membrane which is generated by electron transport complexes of the respiratory chain. F-type ATPases consist of two structural domains, F(1) - containing the extramembraneous catalytic core, and F(0) - containing the membrane proton channel, linked together by a central stalk and a peripheral stalk. During catalysis, ATP synthesis in the catalytic domain of F(1) is coupled via a rotary mechanism of the central stalk subunits to proton translocation. Subunits alpha and beta form the catalytic core in F(1). Rotation of the central stalk against the surrounding alpha(3)beta(3) subunits leads to hydrolysis of ATP in three separate catalytic sites on the beta subunits. Subunit alpha does not bear the catalytic high-affinity ATP-binding sites. In Pisum sativum (Garden pea), this protein is ATP synthase subunit alpha, mitochondrial (ATPA).